Consider the following 130-residue polypeptide: UPF0251 protein MmarC6_0272 (130 aa).

The protein belongs to the UPF0251 family.

This chain is UPF0251 protein MmarC6_0272, found in Methanococcus maripaludis (strain C6 / ATCC BAA-1332).